Here is a 152-residue protein sequence, read N- to C-terminus: Protein Smg homolog (152 aa).

It belongs to the Smg family.

The sequence is that of Protein Smg homolog from Chromobacterium violaceum (strain ATCC 12472 / DSM 30191 / JCM 1249 / CCUG 213 / NBRC 12614 / NCIMB 9131 / NCTC 9757 / MK).